The chain runs to 449 residues: UDP-N-acetylmuramoylalanine--D-glutamate ligase (449 aa).

118 to 124 serves as a coordination point for ATP; it reads GSNGKTT.

This sequence belongs to the MurCDEF family.

The protein localises to the cytoplasm. The catalysed reaction is UDP-N-acetyl-alpha-D-muramoyl-L-alanine + D-glutamate + ATP = UDP-N-acetyl-alpha-D-muramoyl-L-alanyl-D-glutamate + ADP + phosphate + H(+). It functions in the pathway cell wall biogenesis; peptidoglycan biosynthesis. Cell wall formation. Catalyzes the addition of glutamate to the nucleotide precursor UDP-N-acetylmuramoyl-L-alanine (UMA). The polypeptide is UDP-N-acetylmuramoylalanine--D-glutamate ligase (Leuconostoc mesenteroides subsp. mesenteroides (strain ATCC 8293 / DSM 20343 / BCRC 11652 / CCM 1803 / JCM 6124 / NCDO 523 / NBRC 100496 / NCIMB 8023 / NCTC 12954 / NRRL B-1118 / 37Y)).